The following is a 255-amino-acid chain: Acetylglutamate kinase (255 aa).

Substrate is bound by residues 40-41 (GG), arginine 62, and asparagine 153.

Belongs to the acetylglutamate kinase family. ArgB subfamily.

The protein localises to the cytoplasm. The enzyme catalyses N-acetyl-L-glutamate + ATP = N-acetyl-L-glutamyl 5-phosphate + ADP. It participates in amino-acid biosynthesis; L-arginine biosynthesis; N(2)-acetyl-L-ornithine from L-glutamate: step 2/4. Functionally, catalyzes the ATP-dependent phosphorylation of N-acetyl-L-glutamate. This Bacillus cereus (strain ATCC 14579 / DSM 31 / CCUG 7414 / JCM 2152 / NBRC 15305 / NCIMB 9373 / NCTC 2599 / NRRL B-3711) protein is Acetylglutamate kinase.